A 611-amino-acid chain; its full sequence is MPEVEDTCFLTSPITVCRTKHLHLRCSVDFSSRALTGIAALTIQSQEDNLRSLVLDTKALTIEKVVINGQEVKYALGERQSYKGSPMEISLPIALSKNQEVVIEISFETSPKSSALQWLTPEQTSGKEHPYLFSQCQAIHCRAVLPCQDTPSVKLTYTAEVSVPKELVALMSAVRDGETPDPEDPSRKIYKFNQKVPIPCYLIALVVGALESRKIGPRTLVWSEKEQVEKSAYEFSETESMLKIAEDLGGPYVWGQYDLLVLPPSFPYGGMENPCLTFVTPTLLAGDKSLSNVIAHEISHSWTGNLVTNKTWDHFWLNEGHTVYLERHICGRLFGEKFRHFHALGGWGELQNTIKTFGETHPFTKLVVDLTDVDPDVAYSSVPYEKGFALLFHLEQLLGGPEVFLGFLKAYVERFSYKSITTDDWKNFLYSHFKDKVDILNQVDWNAWLYSPGLPPVKPNYDMTLTNACIALSQRWITAKEEDLNTFNATDLKDLSTHQVNEFLAQVLQQAPLPLGHVKRMQEVYNFNAVNNSEIRFRWLRLCIQSKWEEAIPLALKMATEQGRMKFTRPLFKDLAAFDKSHDQAIRTYQAHKASMHPVTAMLVGKDLKVD.

Lysine 73 carries the N6-acetyllysine modification. Residues 135 to 137 and 267 to 272 each bind a peptide; these read QCQ and PYGGME. Histidine 296 is a Zn(2+) binding site. Glutamate 297 serves as the catalytic Proton acceptor. Zn(2+) is bound by residues histidine 300 and glutamate 319. Lysine 337 carries the post-translational modification N6-acetyllysine. The Proton donor role is filled by tyrosine 384. Residue serine 416 is modified to Phosphoserine. Residue 564–566 participates in a peptide binding; sequence RMK. Lysine 573 carries the N6-acetyllysine modification.

It belongs to the peptidase M1 family. It depends on Zn(2+) as a cofactor. Post-translationally, phosphorylation at Ser-416 inhibits enzymatic activity.

Its subcellular location is the cytoplasm. The catalysed reaction is leukotriene A4 + H2O = leukotriene B4. It functions in the pathway lipid metabolism; leukotriene B4 biosynthesis. Its activity is regulated as follows. Inhibited by bestatin. Subject to suicide inhibition by leukotriene A4. Its function is as follows. Epoxide hydrolase that catalyzes the final step in the biosynthesis of the pro-inflammatory mediator leukotriene B4. Also has aminopeptidase activity. The chain is Leukotriene A-4 hydrolase (LTA4H) from Chinchilla lanigera (Long-tailed chinchilla).